We begin with the raw amino-acid sequence, 391 residues long: Phosphoglycerate kinase (391 aa).

Substrate contacts are provided by residues 21–23 (DLN), Arg-36, 59–62 (HLGR), Arg-113, and Arg-146. Residues Lys-197, Glu-319, and 345–348 (GGDT) contribute to the ATP site.

This sequence belongs to the phosphoglycerate kinase family. In terms of assembly, monomer.

It localises to the cytoplasm. It carries out the reaction (2R)-3-phosphoglycerate + ATP = (2R)-3-phospho-glyceroyl phosphate + ADP. It participates in carbohydrate degradation; glycolysis; pyruvate from D-glyceraldehyde 3-phosphate: step 2/5. The protein is Phosphoglycerate kinase of Pseudoalteromonas translucida (strain TAC 125).